We begin with the raw amino-acid sequence, 499 residues long: Probable cytosol aminopeptidase (499 aa).

Mn(2+)-binding residues include K269 and D274. K281 is an active-site residue. Positions 292, 351, and 353 each coordinate Mn(2+). R355 is an active-site residue.

The protein belongs to the peptidase M17 family. Requires Mn(2+) as cofactor.

Its subcellular location is the cytoplasm. It catalyses the reaction Release of an N-terminal amino acid, Xaa-|-Yaa-, in which Xaa is preferably Leu, but may be other amino acids including Pro although not Arg or Lys, and Yaa may be Pro. Amino acid amides and methyl esters are also readily hydrolyzed, but rates on arylamides are exceedingly low.. The enzyme catalyses Release of an N-terminal amino acid, preferentially leucine, but not glutamic or aspartic acids.. In terms of biological role, presumably involved in the processing and regular turnover of intracellular proteins. Catalyzes the removal of unsubstituted N-terminal amino acids from various peptides. This chain is Probable cytosol aminopeptidase, found in Actinobacillus pleuropneumoniae serotype 3 (strain JL03).